A 411-amino-acid chain; its full sequence is Corticotropin-releasing factor receptor 2 (411 aa).

Residues 1-19 (MDAALLLSLLEANCSLALA) constitute a signal peptide (not cleaved). The Extracellular segment spans residues 1 to 108 (MDAALLLSLL…EPILDDKQRK (108 aa)). N-linked (GlcNAc...) asparagine glycosylation is found at N13, N41, N74, N86, and N94. Cystine bridges form between C14-C50, C40-C83, and C64-C98. Residues 109–139 (YDLHYRIALIVNYLGHCVSVVALVAAFLLFL) traverse the membrane as a helical segment. Topologically, residues 140 to 146 (VLRSIRC) are cytoplasmic. A helical membrane pass occupies residues 147–171 (LRNVIHWNLITTFILRNIAWFLLQL). Residues 172–185 (IDHEVHEGNEVWCR) lie on the Extracellular side of the membrane. The cysteines at positions 184 and 254 are disulfide-linked. Residues 186 to 214 (CITTIFNYFVVTNFFWMFVEGCYLHTAIV) form a helical membrane-spanning segment. The Cytoplasmic portion of the chain corresponds to 215–221 (MTYSTEH). A helical transmembrane segment spans residues 222-249 (LRKWLFLFIGWCIPCPIIIAWAVGKLYY). Over 250–265 (ENEQCWFGKEAGDLVD) the chain is Extracellular. The helical transmembrane segment at 266 to 291 (YIYQGPVMLVLLINFVFLFNIVRILM) threads the bilayer. Residues 292–302 (TKLRASTTSET) are Cytoplasmic-facing. Residues 303–327 (IQYRKAVKATLVLLPLLGITYMLFF) form a helical membrane-spanning segment. The Extracellular segment spans residues 328 to 334 (VNPGEDD). The chain crosses the membrane as a helical span at residues 335 to 364 (LSQIVFIYFNSFLQSFQGFFVSVFYCFFNG). Over 365–411 (EVRAALRKRWHRWQDHHALRVPVARAMSIPTSPTRISFHSIKQTAAV) the chain is Cytoplasmic.

Belongs to the G-protein coupled receptor 2 family. In terms of assembly, monomer. Interacts with CRF, UCN, UCN2 and UCN3. An N-glycosylation site within the signal peptide impedes its proper cleavage and function. Highly expressed in the heart. Also expressed in lungs, skeletal muscle, gastrointestinal tract, epididymis, and brain.

Its subcellular location is the cell membrane. In terms of biological role, G-protein coupled receptor for CRH (corticotropin-releasing factor), UCN (urocortin), UCN2 and UCN3. Has high affinity for UCN. Ligand binding causes a conformation change that triggers signaling via guanine nucleotide-binding proteins (G proteins) and down-stream effectors, such as adenylate cyclase. Promotes the activation of adenylate cyclase, leading to increased intracellular cAMP levels. This Mus musculus (Mouse) protein is Corticotropin-releasing factor receptor 2 (Crhr2).